We begin with the raw amino-acid sequence, 383 residues long: Homeobox protein SHOOT MERISTEMLESS (383 aa).

The interval His37–Tyr58 is disordered. In terms of domain architecture, ELK spans Glu263–Phe283. Positions Met284 to Ser347 form a DNA-binding region, homeobox; TALE-type.

It belongs to the TALE/KNOX homeobox family.

It localises to the nucleus. Functionally, required for shoot apical meristem formation during embryogenesis. Probably binds to the DNA sequence 5'-TGAC-3'. In Brassica oleracea (Wild cabbage), this protein is Homeobox protein SHOOT MERISTEMLESS (STM).